Reading from the N-terminus, the 221-residue chain is Ribosomal RNA large subunit methyltransferase E (221 aa).

Residues Gly60, Trp62, Asp89, Asp105, and Asp134 each contribute to the S-adenosyl-L-methionine site. Residue Lys174 is the Proton acceptor of the active site. Positions 199–221 (KPKASRDKSSETFLLGRQLKHPG) are disordered.

It belongs to the class I-like SAM-binding methyltransferase superfamily. RNA methyltransferase RlmE family.

It is found in the cytoplasm. It carries out the reaction uridine(2552) in 23S rRNA + S-adenosyl-L-methionine = 2'-O-methyluridine(2552) in 23S rRNA + S-adenosyl-L-homocysteine + H(+). In terms of biological role, specifically methylates the uridine in position 2552 of 23S rRNA at the 2'-O position of the ribose in the fully assembled 50S ribosomal subunit. This Ralstonia nicotianae (strain ATCC BAA-1114 / GMI1000) (Ralstonia solanacearum) protein is Ribosomal RNA large subunit methyltransferase E.